A 354-amino-acid polypeptide reads, in one-letter code: Rhodopsin (354 aa).

Over 1 to 36 (MNGTEGENFYVPMSNKTGVVRNPFEYPQYYLADHWM) the chain is Extracellular. 2 N-linked (GlcNAc...) asparagine glycosylation sites follow: N2 and N15. The chain crosses the membrane as a helical span at residues 37 to 61 (FAVLAAYMFFLIITGFPVNFLTLFV). Topologically, residues 62-73 (TIQNKKLRQPLN) are cytoplasmic. Residues 74–96 (YILLNLAVANLFMVFGGFTTTLI) traverse the membrane as a helical segment. At 97-110 (TSMNGYFVFGSTGC) the chain is on the extracellular side. C110 and C187 form a disulfide bridge. Residues 111–133 (NLEGFFATLGGEISLWSLVVLAI) form a helical membrane-spanning segment. The 'Ionic lock' involved in activated form stabilization signature appears at 134-136 (ERY). Residues 134 to 152 (ERYVVVCKPMSNFRFGSQH) lie on the Cytoplasmic side of the membrane. Residues 153-173 (AIAGVSLTWVMAMACAAPPLV) form a helical membrane-spanning segment. The Extracellular segment spans residues 174-202 (GWSRYIPEGLQCSCGIDYYTPKPEINNVS). N-linked (GlcNAc...) asparagine glycosylation occurs at N200. The chain crosses the membrane as a helical span at residues 203-224 (FVIYMFVVHFSIPLTIIFFCYG). At 225–252 (RLVCTVKAAAAQQQESETTQRAEREVTR) the chain is on the cytoplasmic side. The chain crosses the membrane as a helical span at residues 253 to 274 (MVVIMVIGFLICWLPYASVALY). Residues 275–286 (IFNNQGSEFGPV) lie on the Extracellular side of the membrane. The helical transmembrane segment at 287 to 308 (FMTIPSFFAKSSALYNPLIYIL) threads the bilayer. Position 296 is an N6-(retinylidene)lysine (K296). Topologically, residues 309-354 (MNKQFRNCMITTLCCGKNPFEEEESTSASASKTEASSVSSSQVSPA) are cytoplasmic. 2 S-palmitoyl cysteine lipidation sites follow: C322 and C323. The segment at 333 to 354 (STSASASKTEASSVSSSQVSPA) is disordered. Over residues 334 to 354 (TSASASKTEASSVSSSQVSPA) the composition is skewed to low complexity.

The protein belongs to the G-protein coupled receptor 1 family. Opsin subfamily. In terms of processing, phosphorylated on some or all of the serine and threonine residues present in the C-terminal region. Contains one covalently linked retinal chromophore.

Its subcellular location is the membrane. The protein localises to the cell projection. It localises to the cilium. It is found in the photoreceptor outer segment. In terms of biological role, photoreceptor required for image-forming vision at low light intensity. While most salt water fish species use retinal as chromophore, most freshwater fish use 3-dehydroretinal, or a mixture of retinal and 3-dehydroretinal. Light-induced isomerization of 11-cis to all-trans retinal triggers a conformational change that activates signaling via G-proteins. Subsequent receptor phosphorylation mediates displacement of the bound G-protein alpha subunit by arrestin and terminates signaling. The polypeptide is Rhodopsin (rho) (Galeus melastomus (Blackmouth catshark)).